Reading from the N-terminus, the 126-residue chain is Ribonuclease VapC23 (126 aa).

The 117-residue stretch at I2 to H118 folds into the PINc domain. Positions 5 and 98 each coordinate Mg(2+).

The protein belongs to the PINc/VapC protein family. Requires Mg(2+) as cofactor.

In terms of biological role, toxic component of a type II toxin-antitoxin (TA) system. An RNase. The cognate antitoxin is VapB23. In Mycobacterium tuberculosis (strain CDC 1551 / Oshkosh), this protein is Ribonuclease VapC23.